We begin with the raw amino-acid sequence, 357 residues long: tRNA-specific 2-thiouridylase MnmA (357 aa).

ATP is bound by residues 7–14 (AMSGGVDS) and M33. Residue C101 is the Nucleophile of the active site. An intrachain disulfide couples C101 to C198. G125 lines the ATP pocket. The interval 148-150 (KDQ) is interaction with tRNA. The active-site Cysteine persulfide intermediate is C198.

This sequence belongs to the MnmA/TRMU family.

The protein localises to the cytoplasm. It carries out the reaction S-sulfanyl-L-cysteinyl-[protein] + uridine(34) in tRNA + AH2 + ATP = 2-thiouridine(34) in tRNA + L-cysteinyl-[protein] + A + AMP + diphosphate + H(+). Its function is as follows. Catalyzes the 2-thiolation of uridine at the wobble position (U34) of tRNA, leading to the formation of s(2)U34. This Herpetosiphon aurantiacus (strain ATCC 23779 / DSM 785 / 114-95) protein is tRNA-specific 2-thiouridylase MnmA.